A 591-amino-acid polypeptide reads, in one-letter code: DDB1- and CUL4-associated factor 8 (591 aa).

Basic and acidic residues predominate over residues 1-14 (MSSKRPSTDGRRDL). Positions 1 to 140 (MSSKRPSTDG…EDWVSSETTA (140 aa)) are disordered. Residues Ser-21 and Ser-22 each carry the phosphoserine modification. The Nuclear export signal signature appears at 39–50 (IEVEASDLSLSL). Composition is skewed to basic and acidic residues over residues 65–99 (RGTD…HGHS) and 118–131 (SRDQ…RALE). Phosphoserine occurs at positions 99, 123, and 124. 7 WD repeats span residues 185–224 (GHTG…PVLD), 228–269 (GHKS…CCKN), 275–315 (QHKG…PASK), 323–363 (EKKV…ENEN), 379–418 (ESKA…GAQY), 426–466 (RNNA…IIQF), and 470–509 (DKGG…STEL). Arg-198 carries the post-translational modification Omega-N-methylarginine; by PRMT1. The segment at 552–591 (HRRWREPGVGATDADSDESPSSSDTSDEEEGPDRVQCMPS) is disordered.

This sequence belongs to the WD repeat DCAF8 family. Interacts with DDB1, CUL4A and CUL4B. Interacts with KPNA1, KPNB1 and XPO1.

It is found in the nucleus. Its subcellular location is the cytoplasm. It participates in protein modification; protein ubiquitination. May function as a substrate receptor for CUL4-DDB1 E3 ubiquitin-protein ligase complex. The chain is DDB1- and CUL4-associated factor 8 (Dcaf8) from Rattus norvegicus (Rat).